The following is a 393-amino-acid chain: Bifunctional enzyme Fae/Hps (393 aa).

Residues M1–I161 form a formaldehyde-activating enzyme region. H17 serves as the catalytic Proton donor. Substrate is bound by residues D19, L48, K66, T68, and Q83. A 3-hexulose-6-phosphate synthase region spans residues M162 to F393.

In the N-terminal section; belongs to the formaldehyde-activating enzyme family. It in the C-terminal section; belongs to the HPS/KGPDC family. HPS subfamily.

The enzyme catalyses 5,6,7,8-tetrahydromethanopterin + formaldehyde = 5,10-methylenetetrahydromethanopterin + H2O. It carries out the reaction D-ribulose 5-phosphate + formaldehyde = D-arabino-hex-3-ulose 6-phosphate. It participates in carbohydrate biosynthesis; D-ribose 5-phosphate biosynthesis. Its function is as follows. Catalyzes the condensation of formaldehyde with tetrahydromethanopterin (H(4)MPT) to 5,10-methylenetetrahydromethanopterin. Catalyzes the reversible formation of ribulose-5-phosphate and formaldehyde from 3-hexulose-6-phosphate. This Methanoregula boonei (strain DSM 21154 / JCM 14090 / 6A8) protein is Bifunctional enzyme Fae/Hps.